The chain runs to 132 residues: MTMTDPVADMLTRLRNANSAYHDTVTMPYSKLKARVADILKAEGYIASWKEEDAEVGKKLTLELKFGPNRERSIAGVRRISKPGLRVYAKSTNLPHVLGGLGVAILSTSSGLLTDKQAGKKGVGGEVLAYVW.

It belongs to the universal ribosomal protein uS8 family. As to quaternary structure, part of the 30S ribosomal subunit. Contacts proteins S5 and S12.

One of the primary rRNA binding proteins, it binds directly to 16S rRNA central domain where it helps coordinate assembly of the platform of the 30S subunit. The chain is Small ribosomal subunit protein uS8 from Arthrobacter sp. (strain FB24).